The sequence spans 425 residues: Serine--tRNA ligase (425 aa).

An L-serine-binding site is contributed by 231-233 (TAE). 262-264 (RSE) contacts ATP. L-serine is bound at residue Glu-285. 349-352 (EISS) provides a ligand contact to ATP. L-serine is bound at residue Ser-385.

Belongs to the class-II aminoacyl-tRNA synthetase family. Type-1 seryl-tRNA synthetase subfamily. Homodimer. The tRNA molecule binds across the dimer.

It is found in the cytoplasm. It catalyses the reaction tRNA(Ser) + L-serine + ATP = L-seryl-tRNA(Ser) + AMP + diphosphate + H(+). The catalysed reaction is tRNA(Sec) + L-serine + ATP = L-seryl-tRNA(Sec) + AMP + diphosphate + H(+). It participates in aminoacyl-tRNA biosynthesis; selenocysteinyl-tRNA(Sec) biosynthesis; L-seryl-tRNA(Sec) from L-serine and tRNA(Sec): step 1/1. Its function is as follows. Catalyzes the attachment of serine to tRNA(Ser). Is also able to aminoacylate tRNA(Sec) with serine, to form the misacylated tRNA L-seryl-tRNA(Sec), which will be further converted into selenocysteinyl-tRNA(Sec). This chain is Serine--tRNA ligase, found in Exiguobacterium sibiricum (strain DSM 17290 / CCUG 55495 / CIP 109462 / JCM 13490 / 255-15).